The following is a 1409-amino-acid chain: L-2-aminoadipate reductase large subunit (1409 aa).

The 80-residue stretch at 858–937 (QALSETEQTL…GFASEIDRLL (80 aa)) folds into the Carrier domain. Serine 896 carries the post-translational modification O-(pantetheine 4'-phosphoryl)serine.

It belongs to the ATP-dependent AMP-binding enzyme family. As to quaternary structure, heterodimer of an alpha and a beta subunit. The cofactor is pantetheine 4'-phosphate.

The enzyme catalyses (S)-2-amino-6-oxohexanoate + NADP(+) + H2O = L-2-aminoadipate + NADPH + 2 H(+). It catalyses the reaction (S)-2-amino-6-oxohexanoate + NAD(+) + H2O = L-2-aminoadipate + NADH + 2 H(+). The catalysed reaction is (S)-2-amino-6-oxohexanoate + AMP + diphosphate + NADP(+) = L-2-aminoadipate + ATP + NADPH + H(+). Its pathway is amino-acid biosynthesis; L-lysine biosynthesis via AAA pathway; L-lysine from L-alpha-aminoadipate (fungal route): step 1/3. Catalyzes the activation of alpha-aminoadipate by ATP-dependent adenylation and the reduction of activated alpha-aminoadipate by NADPH. The activated alpha-aminoadipate is bound to the phosphopantheinyl group of the enzyme itself before it is reduced to (S)-2-amino-6-oxohexanoate. The chain is L-2-aminoadipate reductase large subunit (lys2) from Penicillium chrysogenum (Penicillium notatum).